Reading from the N-terminus, the 608-residue chain is Histone-arginine methyltransferase CARM1 (608 aa).

At Ala2 the chain carries N-acetylalanine. The segment at 27–138 is interaction with C9orf72; the sequence is ATVSVFPGAR…GHTLERSVFS (112 aa). The SAM-dependent MTase PRMT-type domain maps to 146–453; sequence AVQYFQFYGY…KRQSYDISIV (308 aa). Residues Gln159, Arg168, Gly192, and Glu214 each contribute to the S-adenosyl-L-methionine site. Ser216 bears the Phosphoserine mark. Lys227 participates in a covalent cross-link: Glycyl lysine isopeptide (Lys-Gly) (interchain with G-Cter in ubiquitin). 2 residues coordinate S-adenosyl-L-methionine: Glu243 and Ser271. Residues 346–379 are required for nuclear translocation; the sequence is RILMAKSVKYTVNFLEAKEGDLHRIEIPFKFHML. The segment at 499-608 is transactivation domain; the sequence is TGSTYNLSSG…IPTNTMHYGS (110 aa). A Dimethylated arginine modification is found at Arg550.

Belongs to the class I-like SAM-binding methyltransferase superfamily. Protein arginine N-methyltransferase family. As to quaternary structure, homodimer. Interacts with NR1H4. Interacts with SNRPC. Interacts with the C-terminus of NCOA2/GRIP1, NCO3/ACTR and NCOA1/SRC1. Part of a complex consisting of CARM1, EP300/P300 and NCOA2/GRIP1. Interacts with FLII, TP53, myogenic factor MEF2, EP300/P300, TRIM24, CREBBP and CTNNB1. Interacts with RELA. Identified in a complex containing CARM1, TRIM24 and NCOA2/GRIP1. Interacts with NCOA3/SRC3. Interacts with SKP2. Interacts (via PH domain-like fold) with C9orf72. Interacts with PARP1; promoting PARP1 recruimtent to replication forks. In terms of assembly, (Microbial infection) Interacts with HTLV-1 protein Tax. Auto-methylated on Arg-550. Methylation enhances transcription coactivator activity. Methylation is required for its role in the regulation of pre-mRNA alternative splicing. In terms of processing, phosphorylation at Ser-216 is strongly increased during mitosis, and decreases rapidly to a very low, basal level after entry into the G1 phase of the cell cycle. Phosphorylation at Ser-216 may promote location in the cytosol. Phosphorylation at Ser-216 interferes with S-adenosyl-L-methionine binding and strongly reduces methyltransferase activity. Post-translationally, ubiquitinated by E3 ubiquitin-protein ligase complex containing FBXO9 at Lys-227; leading to proteasomal degradation. Overexpressed in prostate adenocarcinomas and high-grade prostatic intraepithelial neoplasia.

Its subcellular location is the nucleus. It is found in the cytoplasm. It localises to the chromosome. It catalyses the reaction L-arginyl-[protein] + 2 S-adenosyl-L-methionine = N(omega),N(omega)-dimethyl-L-arginyl-[protein] + 2 S-adenosyl-L-homocysteine + 2 H(+). With respect to regulation, methylation of H3R17 (H3R17me) by CARM1 is stimulated by preacetylation of H3 'Lys-18' (H3K18ac) H3 'Lys-23' (H3K23ac) by EP300 and blocked by citrullination of H3 'Arg-17' (H3R17ci) by PADI4. Methylates (mono- and asymmetric dimethylation) the guanidino nitrogens of arginyl residues in several proteins involved in DNA packaging, transcription regulation, pre-mRNA splicing, and mRNA stability. Recruited to promoters upon gene activation together with histone acetyltransferases from EP300/P300 and p160 families, methylates histone H3 at 'Arg-17' (H3R17me), forming mainly asymmetric dimethylarginine (H3R17me2a), leading to activation of transcription via chromatin remodeling. During nuclear hormone receptor activation and TCF7L2/TCF4 activation, acts synergically with EP300/P300 and either one of the p160 histone acetyltransferases NCOA1/SRC1, NCOA2/GRIP1 and NCOA3/ACTR or CTNNB1/beta-catenin to activate transcription. During myogenic transcriptional activation, acts together with NCOA3/ACTR as a coactivator for MEF2C. During monocyte inflammatory stimulation, acts together with EP300/P300 as a coactivator for NF-kappa-B. Acts as a coactivator for PPARG, promotes adipocyte differentiation and the accumulation of brown fat tissue. Plays a role in the regulation of pre-mRNA alternative splicing by methylation of splicing factors. Also seems to be involved in p53/TP53 transcriptional activation. Methylates EP300/P300, both at 'Arg-2142', which may loosen its interaction with NCOA2/GRIP1, and at 'Arg-580' and 'Arg-604' in the KIX domain, which impairs its interaction with CREB and inhibits CREB-dependent transcriptional activation. Also methylates arginine residues in RNA-binding proteins PABPC1, ELAVL1 and ELAV4, which may affect their mRNA-stabilizing properties and the half-life of their target mRNAs. Acts as a transcriptional coactivator of ACACA/acetyl-CoA carboxylase by enriching H3R17 methylation at its promoter, thereby positively regulating fatty acid synthesis. Independently of its methyltransferase activity, involved in replication fork progression: promotes PARP1 recruitment to replication forks, leading to poly-ADP-ribosylation of chromatin at replication forks and reduced fork speed. The protein is Histone-arginine methyltransferase CARM1 (CARM1) of Homo sapiens (Human).